The sequence spans 427 residues: 3-phosphoshikimate 1-carboxyvinyltransferase (427 aa).

Lysine 22, serine 23, and arginine 27 together coordinate 3-phosphoshikimate. Lysine 22 contacts phosphoenolpyruvate. Glycine 96 and arginine 124 together coordinate phosphoenolpyruvate. The 3-phosphoshikimate site is built by serine 169, serine 170, glutamine 171, serine 197, aspartate 313, asparagine 336, and lysine 340. Phosphoenolpyruvate is bound at residue glutamine 171. Aspartate 313 (proton acceptor) is an active-site residue. Arginine 344, arginine 386, and lysine 411 together coordinate phosphoenolpyruvate.

Belongs to the EPSP synthase family. Monomer.

It is found in the cytoplasm. The catalysed reaction is 3-phosphoshikimate + phosphoenolpyruvate = 5-O-(1-carboxyvinyl)-3-phosphoshikimate + phosphate. It functions in the pathway metabolic intermediate biosynthesis; chorismate biosynthesis; chorismate from D-erythrose 4-phosphate and phosphoenolpyruvate: step 6/7. In terms of biological role, catalyzes the transfer of the enolpyruvyl moiety of phosphoenolpyruvate (PEP) to the 5-hydroxyl of shikimate-3-phosphate (S3P) to produce enolpyruvyl shikimate-3-phosphate and inorganic phosphate. This Klebsiella pneumoniae subsp. pneumoniae (strain ATCC 700721 / MGH 78578) protein is 3-phosphoshikimate 1-carboxyvinyltransferase.